Consider the following 820-residue polypeptide: DNA gyrase subunit A (820 aa).

Positions 31-496 constitute a Topo IIA-type catalytic domain; it reads IPDVRDGLKP…TLTNIEIEDL (466 aa). The active-site O-(5'-phospho-DNA)-tyrosine intermediate is the Y119. The short motif at 523–529 is the GyrA-box element; that stretch reads QRRGGKG.

It belongs to the type II topoisomerase GyrA/ParC subunit family. In terms of assembly, heterotetramer, composed of two GyrA and two GyrB chains. In the heterotetramer, GyrA contains the active site tyrosine that forms a transient covalent intermediate with DNA, while GyrB binds cofactors and catalyzes ATP hydrolysis.

Its subcellular location is the cytoplasm. It carries out the reaction ATP-dependent breakage, passage and rejoining of double-stranded DNA.. A type II topoisomerase that negatively supercoils closed circular double-stranded (ds) DNA in an ATP-dependent manner to modulate DNA topology and maintain chromosomes in an underwound state. Negative supercoiling favors strand separation, and DNA replication, transcription, recombination and repair, all of which involve strand separation. Also able to catalyze the interconversion of other topological isomers of dsDNA rings, including catenanes and knotted rings. Type II topoisomerases break and join 2 DNA strands simultaneously in an ATP-dependent manner. This Lawsonia intracellularis (strain PHE/MN1-00) protein is DNA gyrase subunit A.